We begin with the raw amino-acid sequence, 977 residues long: Dynamin-like GTPase OPA1, mitochondrial (977 aa).

The transit peptide at 1-86 (MWRTKAAAAC…VKYGYQSYRN (86 aa)) directs the protein to the mitochondrion. Topologically, residues 87–95 (FWLARLASR) are mitochondrial matrix. A helical transmembrane segment spans residues 96–112 (LLKIRYLILGSAVGGGY). The Mitochondrial intermembrane segment spans residues 113 to 787 (TAKKTYDQWE…SVIEDMVGPD (675 aa)). Residues 224–271 (KKVSDKEKIDQLQEELLRTQLKYQRMLERLEKENKELRKLVLQRDDKG) are a coiled coil. A Dynamin-type G domain is found at 302-578 (QDHLPRVVVV…FWKMVRESVE (277 aa)). A G1 motif region spans residues 312 to 319 (GDQSAGKT). 6 residues coordinate GTP: Ser-315, Gly-317, Lys-318, Thr-319, Ser-320, and Gly-334. Residue Thr-319 coordinates Mg(2+). The tract at residues 338–341 (MMTR) is G2 motif. Mg(2+) is bound by residues Thr-340 and Asp-415. The segment at 415-418 (DLPG) is G3 motif. The interval 484 to 487 (TKVD) is G4 motif. Residues Lys-485, Asp-487, and Thr-520 each coordinate GTP. The segment at 518-521 (VVTG) is G5 motif. 2 stalk region regions span residues 606–853 (DRNE…IKDT) and 891–945 (CNDI…VKLL). The paddle region stretch occupies residues 753–873 (SDKQQWDAAI…KTALNHCNLC (121 aa)). An intramembrane segment occupies 788 to 798 (WKKRWLYWISR). The Mitochondrial intermembrane portion of the chain corresponds to 799–977 (TKEQNIRNET…AFIEALHQEK (179 aa)). A disulfide bridge links Cys-873 with Cys-891. Positions 911 to 977 (LRQQLTNTEV…AFIEALHQEK (67 aa)) form a coiled coil.

This sequence belongs to the TRAFAC class dynamin-like GTPase superfamily. Dynamin/Fzo/YdjA family. Oligomeric complex consisting of membrane-bound and soluble forms of OPA1. Post-translationally, cleaved by OMA1 or YME1L downstream of the transmembrane region in response to different signals to generate soluble forms. Cleaved by OMA1 at position S1 following stress conditions, generating the short soluble form (Dynamin-like GTPase OPA1, short form; S-OPA1).

The protein resides in the mitochondrion inner membrane. It is found in the mitochondrion intermembrane space. The catalysed reaction is GTP + H2O = GDP + phosphate + H(+). Dynamin-related GTPase that is essential for normal mitochondrial morphology by mediating fusion of the mitochondrial inner membranes, regulating cristae morphology and maintaining respiratory chain function. Exists in two forms: the transmembrane, long form (Dynamin-like GTPase OPA1, long form; L-OPA1), which is tethered to the inner mitochondrial membrane, and the short soluble form (Dynamin-like GTPase OPA1, short form; S-OPA1), which results from proteolytic cleavage and localizes in the intermembrane space. Both forms (L-OPA1 and S-OPA1) cooperate to catalyze the fusion of the mitochondrial inner membrane. The equilibrium between L-OPA1 and S-OPA1 is essential: excess levels of S-OPA1, produced by cleavage by OMA1 following loss of mitochondrial membrane potential, lead to an impaired equilibrium between L-OPA1 and S-OPA1, inhibiting mitochondrial fusion. The balance between L-OPA1 and S-OPA1 also influences cristae shape and morphology. Its role in mitochondrial morphology is required for mitochondrial genome maintenance. Its function is as follows. Constitutes the transmembrane long form (L-OPA1) that plays a central role in mitochondrial inner membrane fusion and cristae morphology. L-OPA1 and the soluble short form (S-OPA1) form higher-order helical assemblies that coordinate the fusion of mitochondrial inner membranes. Inner membrane-anchored L-OPA1 molecules initiate membrane remodeling by recruiting soluble S-OPA1 to rapidly polymerize into a flexible cylindrical scaffold encaging the mitochondrial inner membrane. Once at the membrane surface, the formation of S-OPA1 helices induce bilayer curvature. OPA1 dimerization through the paddle region, which inserts into cardiolipin-containing membrane, promotes GTP hydrolysis and the helical assembly of a flexible OPA1 lattice on the membrane, which drives membrane curvature and mitochondrial fusion. Plays a role in the maintenance and remodeling of mitochondrial cristae, some invaginations of the mitochondrial inner membrane that provide an increase in the surface area. Probably acts by forming helical filaments at the inside of inner membrane tubes with the shape and dimensions of crista junctions. Functionally, constitutes the soluble short form (S-OPA1) generated by cleavage by OMA1, which plays a central role in mitochondrial inner membrane fusion and cristae morphology. The transmembrane long form (L-OPA1) and the S-OPA1 form higher-order helical assemblies that coordinate the fusion of mitochondrial inner membranes. Inner membrane-anchored L-OPA1 molecules initiate membrane remodeling by recruiting soluble S-OPA1 to rapidly polymerize into a flexible cylindrical scaffold encaging the mitochondrial inner membrane. Once at the membrane surface, the formation of S-OPA1 helices induce bilayer curvature. OPA1 dimerization through the paddle region, which inserts into cardiolipin-containing membrane, promotes GTP hydrolysis and the helical assembly of a flexible OPA1 lattice on the membrane, which drives membrane curvature and mitochondrial fusion. Excess levels of S-OPA1 produced by cleavage by OMA1 following stress conditions that induce loss of mitochondrial membrane potential, lead to an impaired equilibrium between L-OPA1 and S-OPA1, thereby inhibiting mitochondrial fusion. Plays a role in the maintenance and remodeling of mitochondrial cristae, some invaginations of the mitochondrial inner membrane that provide an increase in the surface area. Probably acts by forming helical filaments at the inside of inner membrane tubes with the shape and dimensions of crista junctions. The chain is Dynamin-like GTPase OPA1, mitochondrial from Gallus gallus (Chicken).